Reading from the N-terminus, the 89-residue chain is Small ribosomal subunit protein uS15 (89 aa).

The protein belongs to the universal ribosomal protein uS15 family. In terms of assembly, part of the 30S ribosomal subunit. Forms a bridge to the 50S subunit in the 70S ribosome, contacting the 23S rRNA.

Functionally, one of the primary rRNA binding proteins, it binds directly to 16S rRNA where it helps nucleate assembly of the platform of the 30S subunit by binding and bridging several RNA helices of the 16S rRNA. Its function is as follows. Forms an intersubunit bridge (bridge B4) with the 23S rRNA of the 50S subunit in the ribosome. The polypeptide is Small ribosomal subunit protein uS15 (Beutenbergia cavernae (strain ATCC BAA-8 / DSM 12333 / CCUG 43141 / JCM 11478 / NBRC 16432 / NCIMB 13614 / HKI 0122)).